A 116-amino-acid chain; its full sequence is uncharacterized protein (116 aa).

3 helical membrane-spanning segments follow: residues 5–27 (AILL…AVPC), 42–64 (PFVP…TAGV), and 88–110 (VLHG…VVAI).

The protein localises to the cell membrane. This is an uncharacterized protein from Archaeoglobus fulgidus (strain ATCC 49558 / DSM 4304 / JCM 9628 / NBRC 100126 / VC-16).